A 159-amino-acid chain; its full sequence is Probable minor fimbrial protein (159 aa).

The propeptide at 1-6 (MKKMHG) is leader sequence. Position 7 is an N-methylphenylalanine (Phe-7). A helical transmembrane segment spans residues 7-29 (FTLIELMIVVAIIGVLASIALMQ). Disulfide bonds link Cys-56/Cys-71 and Cys-140/Cys-153.

It belongs to the N-Me-Phe pilin family. In terms of assembly, the pili are polar flexible filaments of about 5.4 nanometers diameter and 2.5 micrometers average length; they consist of only a single polypeptide chain arranged in a helical configuration of five subunits per turn in the assembled pilus.

The protein localises to the fimbrium. It localises to the membrane. This Dichelobacter nodosus (Bacteroides nodosus) protein is Probable minor fimbrial protein (fimZ).